The following is a 213-amino-acid chain: Uridine kinase (213 aa).

15–22 (GASASGKS) contacts ATP.

Belongs to the uridine kinase family.

Its subcellular location is the cytoplasm. The enzyme catalyses uridine + ATP = UMP + ADP + H(+). The catalysed reaction is cytidine + ATP = CMP + ADP + H(+). It participates in pyrimidine metabolism; CTP biosynthesis via salvage pathway; CTP from cytidine: step 1/3. The protein operates within pyrimidine metabolism; UMP biosynthesis via salvage pathway; UMP from uridine: step 1/1. In Salmonella agona (strain SL483), this protein is Uridine kinase.